The following is an 815-amino-acid chain: Probable AMP deaminase (815 aa).

Residues 5 to 27 (YALHLAVATLLGASFAAASAYYM) form a helical membrane-spanning segment. Disordered regions lie at residues 53–116 (LLDA…PVPT) and 144–173 (LLTNGTIGSDPLPGKASQNGDTKPVPSTNM). Residues 105 to 116 (VRPTTPRSPVPT) show a composition bias toward low complexity. Residues 159-173 (ASQNGDTKPVPSTNM) are compositionally biased toward polar residues. The Zn(2+) site is built by H367 and H369. Substrate is bound by residues H369 and 438-443 (KFNLKY). Residue H635 coordinates Zn(2+). E638 is a substrate binding site. Residue H657 is the Proton acceptor of the active site. D712 contacts Zn(2+). Residue 713-716 (DPLQ) coordinates substrate.

It belongs to the metallo-dependent hydrolases superfamily. Adenosine and AMP deaminases family. Homodimer. It depends on Zn(2+) as a cofactor.

The protein resides in the membrane. It catalyses the reaction AMP + H2O + H(+) = IMP + NH4(+). It functions in the pathway purine metabolism; IMP biosynthesis via salvage pathway; IMP from AMP: step 1/1. In terms of biological role, AMP deaminase plays a critical role in energy metabolism. The polypeptide is Probable AMP deaminase (AMPD) (Oryza sativa subsp. japonica (Rice)).